The primary structure comprises 158 residues: Transcriptional repressor NrdR (158 aa).

Residues 3–34 fold into a zinc finger; that stretch reads CPFCGSLDTQVIDSRANEAGDAIRRRRRCAAC. The ATP-cone domain maps to 49 to 139; sequence PQIVKTNGTR…VYKSFKDPDD (91 aa).

This sequence belongs to the NrdR family. Zn(2+) serves as cofactor.

Functionally, negatively regulates transcription of bacterial ribonucleotide reductase nrd genes and operons by binding to NrdR-boxes. The chain is Transcriptional repressor NrdR from Thiobacillus denitrificans (strain ATCC 25259 / T1).